The chain runs to 134 residues: Interleukin-5 (134 aa).

Residues 1–21 form the signal peptide; that stretch reads MRMLLNLSLLALGAAYVSAFA. Residues Asn76 and Asn90 are each glycosylated (N-linked (GlcNAc...) asparagine).

The protein belongs to the IL-5 family. Homodimer; disulfide-linked. Interacts with IL5RA. Interacts with CSF2RB.

The protein resides in the secreted. Functionally, homodimeric cytokine expressed predominantly by T-lymphocytes and NK cells that plays an important role in the survival, differentiation, and chemotaxis of eosinophils. Also acts on activated and resting B-cells to induce immunoglobulin production, growth, and differentiation. Mechanistically, exerts its biological effects through a receptor composed of IL5RA subunit and the cytokine receptor common subunit beta/CSF2RB. Binding to the receptor leads to activation of various kinases including LYN, SYK and JAK2 and thereby propagates signals through the RAS-MAPK and JAK-STAT5 pathways respectively. The polypeptide is Interleukin-5 (IL5) (Canis lupus familiaris (Dog)).